The chain runs to 362 residues: Flotillin-like protein FloA 2 (362 aa).

The helical transmembrane segment at 24-44 (TALLIGALVIFAGIVVVLFIF) threads the bilayer.

The protein belongs to the flotillin-like FloA family. Homooligomerizes.

The protein localises to the cell membrane. It is found in the membrane raft. In terms of biological role, found in functional membrane microdomains (FMM) that may be equivalent to eukaryotic membrane rafts. FMMs are highly dynamic and increase in number as cells age. Flotillins are thought to be important factors in membrane fluidity. This is Flotillin-like protein FloA 2 from Rhodopirellula baltica (strain DSM 10527 / NCIMB 13988 / SH1).